The primary structure comprises 105 residues: Anti-sigma factor RsrA (105 aa).

Zn(2+)-binding residues include Cys11, His37, Cys41, and Cys44. A disulfide bond links Cys11 and Cys44. Positions 33-47 are contributes to redox-sensitivity; the sequence is KFEHHFEECSPCLEK. The tract at residues 86-105 is disordered; the sequence is QSVPEHDVAAAPSSSAPQES. Residues 94 to 105 are compositionally biased toward low complexity; it reads AAAPSSSAPQES.

The protein belongs to the zinc-associated anti-sigma factor (ZAS) superfamily. In terms of assembly, interacts with cognate sigma factor SigR under reducing but not oxiding conditions. Treatment with the thiol-oxidzing agent diamide inhibits the interaction, while incubation with thioredoxin (trxA) stimulates the interaction. Zn(2+) serves as cofactor. In terms of processing, under oxidizing conditions up to 3 disulfide bonds are formed. A single disulfide bond inhibits binding to SigR. Cys-11 forms a disulfide bond with either Cys-44 (the major bind) or Cys-41 (a minor bond).

Functionally, a redox-regulated anti-sigma factor for extracytoplasmic function (ECF) sigma factor SigR, and a key sensor of disulfide stress. Holds SigR, its cognate ECF sigma factor, in an inactive form, inhibiting its sigma activity under reducing but not oxidizing conditions; oxidation and reduction of the anti-sigma factor is reversible. Mycothiol (MSH) is competent for reduction of RsrA, allowing it to bind to SigR. In conjunction with its cognate sigma factor SigR may sense the intracellular level of reduced MSH. Probably releases SigR during oxidative stress. The chain is Anti-sigma factor RsrA (rsrA) from Streptomyces coelicolor (strain ATCC BAA-471 / A3(2) / M145).